Here is a 910-residue protein sequence, read N- to C-terminus: Protein translocase subunit SecA (910 aa).

ATP-binding positions include Q89, 107 to 111 (GEGKT), and D496. The tract at residues 873 to 910 (QEFSGGNLNRSQSNGSSVTVTTSSGGGTERKTSRRRKR) is disordered. Polar residues predominate over residues 876 to 886 (SGGNLNRSQSN).

It belongs to the SecA family. In terms of assembly, monomer and homodimer. Part of the essential Sec protein translocation apparatus which comprises SecA, SecYEG and auxiliary proteins SecDF. Other proteins may also be involved.

It localises to the cell inner membrane. Its subcellular location is the cytoplasm. The catalysed reaction is ATP + H2O + cellular proteinSide 1 = ADP + phosphate + cellular proteinSide 2.. Functionally, part of the Sec protein translocase complex. Interacts with the SecYEG preprotein conducting channel. Has a central role in coupling the hydrolysis of ATP to the transfer of proteins into and across the cell membrane, serving as an ATP-driven molecular motor driving the stepwise translocation of polypeptide chains across the membrane. This chain is Protein translocase subunit SecA, found in Leptospira interrogans serogroup Icterohaemorrhagiae serovar copenhageni (strain Fiocruz L1-130).